The sequence spans 356 residues: Phosphoribosyl pyrophosphate synthase-associated protein 1 (356 aa).

Met1 is modified (N-acetylmethionine). At Asn2 the chain carries N-acetylproline. Ser177 and Ser215 each carry phosphoserine.

The protein belongs to the ribose-phosphate pyrophosphokinase family. In terms of assembly, binds to PRPS1 and PRPS2. Ubiquitous.

Its function is as follows. Seems to play a negative regulatory role in 5-phosphoribose 1-diphosphate synthesis. This is Phosphoribosyl pyrophosphate synthase-associated protein 1 (PRPSAP1) from Homo sapiens (Human).